Consider the following 1084-residue polypeptide: AP-3 complex subunit beta-1 (1084 aa).

A compositionally biased stretch (polar residues) spans 1–11 (MSSNSFAYNEQ). The segment at 1–26 (MSSNSFAYNEQSGGGEATELGQEATS) is disordered. A phosphoserine mark is found at Ser-276 and Ser-609. Residues 663–800 (AGKAKKENPD…KEKKTKQERN (138 aa)) are disordered. Residues 666-677 (AKKENPDKKFYS) are compositionally biased toward basic and acidic residues. Over residues 678 to 717 (ESEEEEDSSESSSDSESESGSESGEDEEDDRSGDSAEDSG) the composition is skewed to acidic residues. The segment covering 718 to 729 (ESGSEPEAGKGR) has biased composition (low complexity). Residues 738 to 753 (GRGDSKDVDKEKENSK) show a composition bias toward basic and acidic residues. Ser-742 is modified (phosphoserine). Residues 754–767 (TSESSSGESSSIEE) show a composition bias toward low complexity. Residues 768–781 (SSSDSESESESESE) are compositionally biased toward acidic residues. The span at 782–800 (SESRKVTKEKEKKTKQERN) shows a compositional bias: basic and acidic residues.

This sequence belongs to the adaptor complexes large subunit family. As to quaternary structure, adaptor protein complex 3 (AP-3) is a heterotetramer composed of two large adaptins (delta-type subunit AP3D1 and beta-type subunit AP3B1 or AP3B2), a medium adaptin (mu-type subunit AP3M1 or AP3M2) and a small adaptin (sigma-type subunit APS1 or AP3S2). AP-3 associates with the BLOC-1 complex. Interacts with KIF3A; interaction is direct; interaction is impaired by pyrophosphorylation of AP3B1. Phosphorylated on serine residues. Post-translationally, pyrophosphorylation by 5-diphosphoinositol pentakisphosphate (5-IP7) impairs interaction with KIF3A. Serine pyrophosphorylation is achieved by Mg(2+)-dependent, but enzyme independent transfer of a beta-phosphate from a inositol pyrophosphate to a pre-phosphorylated serine residue.

The protein localises to the cytoplasmic vesicle. The protein resides in the clathrin-coated vesicle membrane. It localises to the golgi apparatus. Subunit of non-clathrin- and clathrin-associated adaptor protein complex 3 (AP-3) that plays a role in protein sorting in the late-Golgi/trans-Golgi network (TGN) and/or endosomes. The AP complexes mediate both the recruitment of clathrin to membranes and the recognition of sorting signals within the cytosolic tails of transmembrane cargo molecules. AP-3 appears to be involved in the sorting of a subset of transmembrane proteins targeted to lysosomes and lysosome-related organelles. In concert with the BLOC-1 complex, AP-3 is required to target cargos into vesicles assembled at cell bodies for delivery into neurites and nerve terminals. The sequence is that of AP-3 complex subunit beta-1 (AP3B1) from Bos taurus (Bovine).